The primary structure comprises 327 residues: Malate dehydrogenase (327 aa).

Gly-12–Gly-18 contributes to the NAD(+) binding site. Substrate-binding residues include Arg-93 and Arg-99. NAD(+) is bound by residues Asn-106, Gln-113, and Val-130 to Asn-132. Positions 132 and 163 each coordinate substrate. His-188 (proton acceptor) is an active-site residue.

Belongs to the LDH/MDH superfamily. MDH type 2 family.

The catalysed reaction is (S)-malate + NAD(+) = oxaloacetate + NADH + H(+). In terms of biological role, catalyzes the reversible oxidation of malate to oxaloacetate. The protein is Malate dehydrogenase of Cupriavidus necator (strain ATCC 17699 / DSM 428 / KCTC 22496 / NCIMB 10442 / H16 / Stanier 337) (Ralstonia eutropha).